The sequence spans 190 residues: 6,7-dimethyl-8-ribityllumazine synthase (190 aa).

5-amino-6-(D-ribitylamino)uracil-binding positions include Trp-31, 65–67 (SFE), and 89–91 (CVI). 94-95 (ET) contributes to the (2S)-2-hydroxy-3-oxobutyl phosphate binding site. His-97 serves as the catalytic Proton donor. Residue Phe-122 coordinates 5-amino-6-(D-ribitylamino)uracil. Position 136 (Arg-136) interacts with (2S)-2-hydroxy-3-oxobutyl phosphate.

Belongs to the DMRL synthase family.

It catalyses the reaction (2S)-2-hydroxy-3-oxobutyl phosphate + 5-amino-6-(D-ribitylamino)uracil = 6,7-dimethyl-8-(1-D-ribityl)lumazine + phosphate + 2 H2O + H(+). Its pathway is cofactor biosynthesis; riboflavin biosynthesis; riboflavin from 2-hydroxy-3-oxobutyl phosphate and 5-amino-6-(D-ribitylamino)uracil: step 1/2. Functionally, catalyzes the formation of 6,7-dimethyl-8-ribityllumazine by condensation of 5-amino-6-(D-ribitylamino)uracil with 3,4-dihydroxy-2-butanone 4-phosphate. This is the penultimate step in the biosynthesis of riboflavin. In Flavobacterium johnsoniae (strain ATCC 17061 / DSM 2064 / JCM 8514 / BCRC 14874 / CCUG 350202 / NBRC 14942 / NCIMB 11054 / UW101) (Cytophaga johnsonae), this protein is 6,7-dimethyl-8-ribityllumazine synthase.